Consider the following 628-residue polypeptide: MWLPVYVPLLLVFGVSLSLPQGSLGTDSSSLRGVDADTEKRINVGKKHLQTLRNLETRCHDSLQALVVIDAGSSSTRTNVFLAKTRSCPNKGRSIDPDSIQLIGAGKRFAGLRVVLEEWLDTYAGKDWESRPVDARLLFQYVPQMHEGAKKLMQLLEEDTVAILDSQLNEKQKVQVKALGIPVMLCSTAGVRDFHEWYRDALFVLLRHLINNPSPAHGYKFFTNPFWTRPITGAEEGLFAFITLNHLSRRLGEDPARCMIDEYGVKQCRNDLAGVVEVGGASAQIVFPLQEGTVLPSSVRAVNLQRERLLPERYPSADVVSVSFMQLGMASSAGLFLKELCSNDEFLQGGICSNPCLFKGFQQSCSAGEVEVRPDGSASVNEDVRKNRLKPLATYCSVNNPEISFKVTNEMQCRENSIDPTKPLAERMKIENCSIIKGTGNFDKCVSQVESILVAPKLPLPANIEAASSGFESVDQVFRFASSTAPMIVTGGGMLAAINTLKDHRLLRSDFSGDVEELAEAAREFCSSEVIIRTDGPVIQLPNARGEQKLNSLNFDLCKTMALTVSLLRHMAAGENQPSFIKWEKSIAGPDGKPLADLGWQVGVILHHVLFTEEWGRNAYEAGYSHNL.

The signal sequence occupies residues 1-25; that stretch reads MWLPVYVPLLLVFGVSLSLPQGSLG. The active-site Proton acceptor is the Glu236. An N-linked (GlcNAc...) asparagine glycan is attached at Asn432.

It belongs to the GDA1/CD39 NTPase family. In terms of assembly, homotetramer.

The protein resides in the secreted. It is found in the parasitophorous vacuole. The enzyme catalyses a ribonucleoside 5'-triphosphate + H2O = a ribonucleoside 5'-diphosphate + phosphate + H(+). May perform an important processing step in the conversion of high energy nucleotides prior to uptake by the parasite and may contribute to intracellular survival and virulence. NTPAse-I has a specific activity 4.5-fold higher than NTPAse-II in hydrolysis of ATP. The primary difference between these isozymes lies in their ability to hydrolyze nucleoside triphosphate versus diphosphate substrates. While NTPAse-II hydrolyzes ATP to ADP and ADP to AMP at almost the same rate, NTPAse-I hydrolyzes ADP to AMP at a much slower rate (0.7% of the rate for ATP). This Toxoplasma gondii protein is Nucleoside-triphosphatase 1 (NTP3).